Here is a 226-residue protein sequence, read N- to C-terminus: Large ribosomal subunit protein uL3 (226 aa).

Gln-160 bears the N5-methylglutamine mark.

This sequence belongs to the universal ribosomal protein uL3 family. In terms of assembly, part of the 50S ribosomal subunit. Forms a cluster with proteins L14 and L19. Methylated by PrmB.

In terms of biological role, one of the primary rRNA binding proteins, it binds directly near the 3'-end of the 23S rRNA, where it nucleates assembly of the 50S subunit. The chain is Large ribosomal subunit protein uL3 from Leptothrix cholodnii (strain ATCC 51168 / LMG 8142 / SP-6) (Leptothrix discophora (strain SP-6)).